Here is a 26-residue protein sequence, read N- to C-terminus: Delta-hemolysin (26 aa).

Met1 is modified (N-formylmethionine).

The protein belongs to the delta-lysin family.

The protein localises to the secreted. It localises to the host cell membrane. Its function is as follows. Lyses erythrocytes and many other mammalian cells. In Staphylococcus aureus (strain Mu50 / ATCC 700699), this protein is Delta-hemolysin (hld).